A 346-amino-acid chain; its full sequence is Tryptophan--tRNA ligase (346 aa).

ATP is bound by residues Gln21 to Thr23 and Gly30 to Asn31. Positions Pro22–Asn31 match the 'HIGH' region motif. Asp147 lines the L-tryptophan pocket. ATP contacts are provided by residues Gly159–Asp161, Ile198, and Lys207–Ser211. Positions Lys207–Ser211 match the 'KMSKS' region motif.

This sequence belongs to the class-I aminoacyl-tRNA synthetase family. As to quaternary structure, homodimer.

The protein resides in the cytoplasm. The enzyme catalyses tRNA(Trp) + L-tryptophan + ATP = L-tryptophyl-tRNA(Trp) + AMP + diphosphate + H(+). In terms of biological role, catalyzes the attachment of tryptophan to tRNA(Trp). This is Tryptophan--tRNA ligase from Corynebacterium efficiens (strain DSM 44549 / YS-314 / AJ 12310 / JCM 11189 / NBRC 100395).